The following is a 318-amino-acid chain: NADH-ubiquinone oxidoreductase chain 1 (318 aa).

8 helical membrane passes run 2–22 (FMINILMLIIPILLAVAFLTL), 70–90 (MFILAPIMALGLALTMWIPLP), 100–120 (LGVLFMLAMSSLAVYSILWSG), 147–167 (AIILLSVLLMSGSFTLSTLII), 172–192 (MWLILPAWPLAMMWFISTLAE), 222–242 (LFFMAEYANIIMMNIFTAILF), 253–273 (ELYTINFTIKSLLLTMSFLWI), and 294–314 (LPLTLALCMWHVSLPILTSGI).

The protein belongs to the complex I subunit 1 family. Core subunit of respiratory chain NADH dehydrogenase (Complex I) which is composed of 45 different subunits.

Its subcellular location is the mitochondrion inner membrane. The enzyme catalyses a ubiquinone + NADH + 5 H(+)(in) = a ubiquinol + NAD(+) + 4 H(+)(out). Functionally, core subunit of the mitochondrial membrane respiratory chain NADH dehydrogenase (Complex I) which catalyzes electron transfer from NADH through the respiratory chain, using ubiquinone as an electron acceptor. Essential for the catalytic activity and assembly of complex I. In Bos indicus (Zebu), this protein is NADH-ubiquinone oxidoreductase chain 1 (MT-ND1).